We begin with the raw amino-acid sequence, 110 residues long: Transmembrane protein 233 (110 aa).

The tract at residues 1–32 is disordered; the sequence is MSQYASRSDSKGALDSSSPEAYTEDDKTEEDI. Residues 1–42 lie on the Cytoplasmic side of the membrane; it reads MSQYASRSDSKGALDSSSPEAYTEDDKTEEDIPAPSNYLWLT. Residues 22-32 are compositionally biased toward acidic residues; sequence YTEDDKTEEDI. Residues 43 to 63 constitute an intramembrane region (helical); it reads IISCFCPAYPVNIVALVFSIM. Residues 64-85 are Cytoplasmic-facing; the sequence is SLNSYNDGDYEGARRLGRNAKW. Residues 86–106 traverse the membrane as a helical segment; sequence VAIASIIIGLVIIGVSCAVHF. Over 107-110 the chain is Extracellular; the sequence is SRNP.

It belongs to the CD225/Dispanin family. As to quaternary structure, interacts with the giant stinging tree toxin ExTxA (P0DQP3). Interacts with Nav1.7/SCN9A. Interacts with Nav1.1/SCN1A, Nav1.2/SCN2A, Nav1.3/SCN3A, Nav1.4/SCN4A, Nav1.5/SCN5A, and Nav1.6/SCN8A. In terms of tissue distribution, probably expressed in nociceptive neurons. Detected in dorsal root ganglion neurons.

The protein localises to the membrane. Functionally, probable accessory protein of voltage-gated sodium channels. The chain is Transmembrane protein 233 from Mus musculus (Mouse).